The primary structure comprises 156 residues: MPRRRRAVIREVAPDAIYNSTLVEKFVNSMMWQGKKNTAQGIFYDAMDKIRERTSDDPLKAFKKAVENAKPLLEVKTRRVGGANYQVPIEVPQNRRTSLAMRWIITNARTRPEKGMAEKLANELNDAANLRGGAIKKRDDVHRMAEANKAFAHYRW.

The protein belongs to the universal ribosomal protein uS7 family. Part of the 30S ribosomal subunit. Contacts proteins S9 and S11.

One of the primary rRNA binding proteins, it binds directly to 16S rRNA where it nucleates assembly of the head domain of the 30S subunit. Is located at the subunit interface close to the decoding center, probably blocks exit of the E-site tRNA. This chain is Small ribosomal subunit protein uS7, found in Solibacter usitatus (strain Ellin6076).